We begin with the raw amino-acid sequence, 273 residues long: Protein BMH2 (273 aa).

Position 2 is an N-acetylserine (serine 2). Residues 236–273 (DISESGQEDQQQQQQQQQQQQQQQQQAPAEQTQGEPTK) are disordered. Residues 245 to 261 (QQQQQQQQQQQQQQQQQ) show a composition bias toward low complexity. Residues 262–273 (APAEQTQGEPTK) show a composition bias toward polar residues.

The protein belongs to the 14-3-3 family. In terms of assembly, interacts with NTH1 (via N-terminus when phosphorylated by PKA); the interaction is direct and activates NTH1. Interacts with FIN1.

The protein resides in the cytoplasm. The protein localises to the nucleus. The chain is Protein BMH2 (BMH2) from Saccharomyces cerevisiae (strain ATCC 204508 / S288c) (Baker's yeast).